The following is a 472-amino-acid chain: Serine/threonine-protein phosphatase T (472 aa).

3 TPR repeats span residues 7–40 (ADKL…TKTP), 41–73 (TLFC…EPTF), and 74–107 (AKAY…APQN). The Mn(2+) site is built by Asp217, His219, Asp246, and Asn278. Residue His279 is the Proton donor/acceptor of the active site. His327 and His403 together coordinate Mn(2+).

The protein belongs to the PPP phosphatase family. PP-5 (PP-T) subfamily. The cofactor is Mg(2+). Requires Mn(2+) as cofactor.

It localises to the cytoplasm. The protein localises to the cytosol. Its subcellular location is the nucleus. It catalyses the reaction O-phospho-L-seryl-[protein] + H2O = L-seryl-[protein] + phosphate. It carries out the reaction O-phospho-L-threonyl-[protein] + H2O = L-threonyl-[protein] + phosphate. Its activity is regulated as follows. Activated by arachidonic acid. Its function is as follows. May function as a protein phosphatase. This is Serine/threonine-protein phosphatase T from Trypanosoma brucei brucei (strain 927/4 GUTat10.1).